The following is a 63-amino-acid chain: Large ribosomal subunit protein bL28 (63 aa).

The tract at residues 1-21 (MSRRDDLTGKGPMFGNNRSHA) is disordered.

This sequence belongs to the bacterial ribosomal protein bL28 family.

In Mycoplasmopsis pulmonis (strain UAB CTIP) (Mycoplasma pulmonis), this protein is Large ribosomal subunit protein bL28.